Consider the following 399-residue polypeptide: S-adenosylmethionine synthase (399 aa).

Residue H17 participates in ATP binding. D19 lines the Mg(2+) pocket. E45 contributes to the K(+) binding site. E58 and Q101 together coordinate L-methionine. The interval 101 to 111 (QSPDIAQGVDE) is flexible loop. Residues 177 to 179 (DAK), 244 to 245 (RF), D253, 259 to 260 (RK), A276, and K280 contribute to the ATP site. D253 contacts L-methionine. L-methionine is bound at residue K284.

It belongs to the AdoMet synthase family. As to quaternary structure, homotetramer; dimer of dimers. Requires Mg(2+) as cofactor. K(+) is required as a cofactor.

The protein resides in the cytoplasm. The enzyme catalyses L-methionine + ATP + H2O = S-adenosyl-L-methionine + phosphate + diphosphate. It functions in the pathway amino-acid biosynthesis; S-adenosyl-L-methionine biosynthesis; S-adenosyl-L-methionine from L-methionine: step 1/1. Catalyzes the formation of S-adenosylmethionine (AdoMet) from methionine and ATP. The overall synthetic reaction is composed of two sequential steps, AdoMet formation and the subsequent tripolyphosphate hydrolysis which occurs prior to release of AdoMet from the enzyme. This Listeria innocua serovar 6a (strain ATCC BAA-680 / CLIP 11262) protein is S-adenosylmethionine synthase.